Here is a 383-residue protein sequence, read N- to C-terminus: Galactokinase (383 aa).

Residue 34-37 (EHTD) participates in substrate binding. 124-130 (GAGLSSS) is a binding site for ATP. The Mg(2+) site is built by Ser-130 and Glu-162. The active-site Proton acceptor is Asp-174. Tyr-223 lines the substrate pocket.

Belongs to the GHMP kinase family. GalK subfamily.

It localises to the cytoplasm. The catalysed reaction is alpha-D-galactose + ATP = alpha-D-galactose 1-phosphate + ADP + H(+). Its pathway is carbohydrate metabolism; galactose metabolism. In terms of biological role, catalyzes the transfer of the gamma-phosphate of ATP to D-galactose to form alpha-D-galactose-1-phosphate (Gal-1-P). The sequence is that of Galactokinase from Serratia proteamaculans (strain 568).